Here is a 245-residue protein sequence, read N- to C-terminus: MSIPLYLYGIFPNTIPETLELEGLDKQPVHSQVVDEFCFLYSEARQEKYLASRRNLLTHEKVLEQTMHAGFRVLLPLRFGLVVKDWETIMSQLINPHKDQLNQLFQKLAGKREVSIKIFWDAKAELQTMMESHQDLKQQRDNMEGKKLSMEEVIQIGQLIEINLLARKQAVIEVFSQELNPFAQEIVVSDPMTEEMIYNAAFLIPWESESEFSERVEVIDQKFGDRLRIRYNNFTAPYTFAQLDS.

It belongs to the gas vesicle GvpF/GvpL family. In terms of assembly, binds GvpA.

The protein resides in the gas vesicle. Functionally, a minor component of the gas vesicle, may be involved in preventing GvpA aggregation during gas vesicle nucleation. Gas vesicles (GV) are hollow, gas filled proteinaceous nanostructures. During planktonic growth they allow positioning of the organism at a favorable depth for light or nutrient acquisition. This Dolichospermum flosaquae (Anabaena flos-aquae) protein is Gas vesicle protein F.